A 575-amino-acid polypeptide reads, in one-letter code: V-type ATP synthase alpha chain (575 aa).

238 to 245 (GPFGAGKT) serves as a coordination point for ATP.

Belongs to the ATPase alpha/beta chains family.

It catalyses the reaction ATP + H2O + 4 H(+)(in) = ADP + phosphate + 5 H(+)(out). In terms of biological role, produces ATP from ADP in the presence of a proton gradient across the membrane. The V-type alpha chain is a catalytic subunit. The protein is V-type ATP synthase alpha chain (atpA) of Borreliella burgdorferi (strain ATCC 35210 / DSM 4680 / CIP 102532 / B31) (Borrelia burgdorferi).